The sequence spans 224 residues: Cytidylate kinase (224 aa).

An ATP-binding site is contributed by 11–19 (GPAAAGKST).

This sequence belongs to the cytidylate kinase family. Type 1 subfamily.

The protein localises to the cytoplasm. The enzyme catalyses CMP + ATP = CDP + ADP. It catalyses the reaction dCMP + ATP = dCDP + ADP. The protein is Cytidylate kinase of Listeria monocytogenes serotype 4a (strain HCC23).